Consider the following 654-residue polypeptide: MKFTVVAAALLLLCAVRAEEEDKKEDVGTVVGIDLGTTYSCVGVFKNGRVEIIANDQGNRITPSYVAFTPEGERLIGDAAKNQLTSNPENTVFDAKRLIGRTWNDPSVQQDIKFLPFKVVEKKTKPYIQVDIGGGQTKTFAPEEISAMVLTKMKETAEAYLGKKVTHAVVTVPAYFNDAQRQATKDAGTIAGLNVMRIINEPTAAAIAYGLDKREGEKNILVFDLGGGTFDVSLLTIDNGVFEVVATNGDTHLGGEDFDQRVMEHFIKLYKKKTGKDVRKDNRAVQKLRREVEKAKRALSSQHQARIEIESFFEGEDFSETLTRAKFEELNMDLFRSTMKPVQKVLEDSDLKKSDIDEIVLVGGSTRIPKIQQLVKEFFNGKEPSRGINPDEAVAYGAAVQAGVLSGDQDTGDLVLLDVCPLTLGIETVGGVMTKLIPRNTVVPTKKSQIFSTASDNQPTVTIKVYEGERPLTKDNHLLGTFDLTGIPPAPRGVPQIEVTFEIDVNGILRVTAEDKGTGNKNKITITNDQNRLTPEEIERMVNDAEKFAEEDKKLKERIDTRNELESYAYSLKNQIGDKEKLGGKLSPEDKETMEKAVEEKIEWLESHQDADIEDFKAKKKELEEIVQPIISKLYGSGGPPPTGEEDTSEKDEL.

The first 18 residues, 1–18 (MKFTVVAAALLLLCAVRA), serve as a signal peptide directing secretion. The required for interaction with ELAPOR1 stretch occupies residues 1-80 (MKFTVVAAAL…EGERLIGDAA (80 aa)). 36–39 (GTTY) contacts ATP. The residue at position 86 (Ser86) is a Phosphoserine. Position 96 (Lys96) interacts with ATP. Lys125 carries the N6-acetyllysine modification. The nucleotide-binding (NBD) stretch occupies residues 125-280 (KPYIQVDIGG…KKKTGKDVRK (156 aa)). At Tyr160 the chain carries 3'-nitrotyrosine. The residue at position 213 (Lys213) is an N6-acetyllysine. An ATP-binding site is contributed by 227 to 229 (GGT). The residue at position 271 (Lys271) is an N6-acetyllysine. 293–300 (EKAKRALS) serves as a coordination point for ATP. Lys326 carries the post-translational modification N6-acetyllysine. A Glycyl lysine isopeptide (Lys-Gly) (interchain with G-Cter in SUMO2) cross-link involves residue Lys352. An N6-acetyllysine; alternate modification is found at Lys353. Residue Lys353 forms a Glycyl lysine isopeptide (Lys-Gly) (interchain with G-Cter in SUMO1); alternate linkage. 364 to 367 (GSTR) lines the ATP pocket. The segment at 409–419 (QDTGDLVLLDV) is interdomain linker. The interval 420 to 500 (CPLTLGIETV…PRGVPQIEVT (81 aa)) is substrate-binding (SBD). Residue Lys447 is modified to N6-succinyllysine. An Omega-N-methylarginine modification is found at Arg492. An O-AMP-threonine; alternate modification is found at Thr518. Thr518 is subject to Phosphothreonine; alternate. Position 585 is an N6,N6,N6-trimethyllysine; by METTL21A; in vitro (Lys585). An N6,N6-dimethyllysine; alternate modification is found at Lys585. Residue Lys585 is modified to N6-methyllysine; alternate. Lys591 carries the post-translational modification N6-methyllysine. The interval 631–654 (ISKLYGSGGPPPTGEEDTSEKDEL) is disordered. Thr643 and Thr648 each carry phosphothreonine. Over residues 644-654 (GEEDTSEKDEL) the composition is skewed to acidic residues. Residue Ser649 is modified to Phosphoserine. A Prevents secretion from ER motif is present at residues 651–654 (KDEL).

Belongs to the heat shock protein 70 family. In terms of assembly, monomer and homooligomer; homooligomerization via the interdomain linker inactivates the chaperone activity and acts as a storage of HSPA5/BiP molecules. Interacts with DNAJC1 (via J domain). Component of an EIF2 complex at least composed of CELF1/CUGBP1, CALR, CALR3, EIF2S1, EIF2S2, HSP90B1 and HSPA5. Part of a large chaperone multiprotein complex comprising DNAJB11, HSP90B1, HSPA5, HYOU, PDIA2, PDIA4, PDIA6, PPIB, SDF2L1, UGGT1 and very small amounts of ERP29, but not, or at very low levels, CALR nor CANX. Interacts with TMEM132A and TRIM21. May form a complex with ERLEC1, OS9, SEL1L and SYVN1. Interacts with DNAJC10. Interacts with DNAJB9/ERdj4; leading to recruit HSPA5/BiP to ERN1/IRE1. Interacts with ERN1/IRE1 (via luminal domain); the interaction takes place following interaction with DNAJB9/ERdj4 and leads to inactivate ERN1/IRE1, the interaction also competitively inhibits ERN1 interaction with MANF. Interacts directly with MANF (via SAP domain); the interaction inhibits ATP binding to HSPA5/BiP and subsequent nucleotide exchange. Interacts with EIF2AK3/PERK (via luminal domain); interaction leads to inactivate EIF2AK3/PERK. Interacts with MX1. Interacts with METTL23. Interacts with CEMIP; the interaction induces calcium leakage from the endoplasmic reticulum and cell migration. Interacts with PCSK4 form; the interaction takes place in the endoplasmic reticulum. Interacts with CIPC. Interacts with CCDC88B (via C-terminus); the interaction opposes ERN1-mediated JNK activation, protecting against apoptosis. Interacts with INPP5K; necessary for INPP5K localization at the endoplasmic reticulum. Interacts with MANF; the interaction is direct. Interacts with LOXL2; leading to activate the ERN1/IRE1-XBP1 pathway of the unfolded protein response. Interacts with CLU under stressed condition; interaction increases CLU protein stability; facilitates its retrotranslocation and redistribution to the mitochondria; cooperatively suppress stress-induced apoptosis by stabilizing mitochondrial membrane integrity. Interacts with CCDC47. Interacts with CLN3. Interacts with ELAPOR1; may regulate the function of HSPA5 in apoptosis and cell proliferation. Interacts with CASP7. Interacts with ILDR2; the interaction stabilizes ILDR2 expression. Interacts with ADAM7. Post-translationally, in unstressed cells, AMPylation at Thr-518 by FICD inactivates the chaperome activity: AMPylated form is locked in a relatively inert state and only weakly stimulated by J domain-containing proteins. In response to endoplasmic reticulum stress, de-AMPylation by the same protein, FICD, restores the chaperone activity.

It localises to the endoplasmic reticulum lumen. The protein localises to the melanosome. Its subcellular location is the cytoplasm. It is found in the cell surface. It catalyses the reaction ATP + H2O = ADP + phosphate + H(+). The chaperone activity is regulated by ATP-induced allosteric coupling of the nucleotide-binding (NBD) and substrate-binding (SBD) domains. In the ADP-bound and nucleotide-free (apo) states, the two domains have little interaction. In contrast, in the ATP-bound state the two domains are tightly coupled, which results in drastically accelerated kinetics in both binding and release of polypeptide substrates. J domain-containing co-chaperones (DNAJB9/ERdj4 or DNAJC10/ERdj5) stimulate the ATPase activity and are required for efficient substrate recognition by HSPA5/BiP. Homooligomerization inactivates participating HSPA5/BiP protomers and probably act as reservoirs to store HSPA5/BiP molecules when they are not needed by the cell. Endoplasmic reticulum chaperone that plays a key role in protein folding and quality control in the endoplasmic reticulum lumen. Involved in the correct folding of proteins and degradation of misfolded proteins via its interaction with DNAJC10/ERdj5, probably to facilitate the release of DNAJC10/ERdj5 from its substrate. Acts as a key repressor of the EIF2AK3/PERK and ERN1/IRE1-mediated unfolded protein response (UPR). In the unstressed endoplasmic reticulum, recruited by DNAJB9/ERdj4 to the luminal region of ERN1/IRE1, leading to disrupt the dimerization of ERN1/IRE1, thereby inactivating ERN1/IRE1. Also binds and inactivates EIF2AK3/PERK in unstressed cells. Accumulation of misfolded protein in the endoplasmic reticulum causes release of HSPA5/BiP from ERN1/IRE1 and EIF2AK3/PERK, allowing their homodimerization and subsequent activation. Plays an auxiliary role in post-translational transport of small presecretory proteins across endoplasmic reticulum (ER). May function as an allosteric modulator for SEC61 channel-forming translocon complex, likely cooperating with SEC62 to enable the productive insertion of these precursors into SEC61 channel. Appears to specifically regulate translocation of precursors having inhibitory residues in their mature region that weaken channel gating. May also play a role in apoptosis and cell proliferation. The sequence is that of Endoplasmic reticulum chaperone BiP from Rattus norvegicus (Rat).